We begin with the raw amino-acid sequence, 637 residues long: Chaperone protein HtpG (637 aa).

Residues 1–345 (MTAAQKETLG…SNDLPLNVSR (345 aa)) are a; substrate-binding. Positions 346–562 (EILQDNKVTQ…DNDMSSQMQK (217 aa)) are b. The interval 563–637 (LMESVGQAAP…LNKLMLELSK (75 aa)) is c.

This sequence belongs to the heat shock protein 90 family. As to quaternary structure, homodimer.

Its subcellular location is the cytoplasm. Functionally, molecular chaperone. Has ATPase activity. The chain is Chaperone protein HtpG from Pseudoalteromonas translucida (strain TAC 125).